Here is a 957-residue protein sequence, read N- to C-terminus: Glycine dehydrogenase (decarboxylating) (957 aa).

Lys708 carries the post-translational modification N6-(pyridoxal phosphate)lysine.

It belongs to the GcvP family. In terms of assembly, the glycine cleavage system is composed of four proteins: P, T, L and H. The cofactor is pyridoxal 5'-phosphate.

The catalysed reaction is N(6)-[(R)-lipoyl]-L-lysyl-[glycine-cleavage complex H protein] + glycine + H(+) = N(6)-[(R)-S(8)-aminomethyldihydrolipoyl]-L-lysyl-[glycine-cleavage complex H protein] + CO2. Its function is as follows. The glycine cleavage system catalyzes the degradation of glycine. The P protein binds the alpha-amino group of glycine through its pyridoxal phosphate cofactor; CO(2) is released and the remaining methylamine moiety is then transferred to the lipoamide cofactor of the H protein. This chain is Glycine dehydrogenase (decarboxylating), found in Escherichia coli O157:H7.